A 350-amino-acid chain; its full sequence is Phosphate acyltransferase (350 aa).

The protein belongs to the PlsX family. In terms of assembly, homodimer. Probably interacts with PlsY.

Its subcellular location is the cytoplasm. The catalysed reaction is a fatty acyl-[ACP] + phosphate = an acyl phosphate + holo-[ACP]. The protein operates within lipid metabolism; phospholipid metabolism. Functionally, catalyzes the reversible formation of acyl-phosphate (acyl-PO(4)) from acyl-[acyl-carrier-protein] (acyl-ACP). This enzyme utilizes acyl-ACP as fatty acyl donor, but not acyl-CoA. The sequence is that of Phosphate acyltransferase from Phenylobacterium zucineum (strain HLK1).